Consider the following 186-residue polypeptide: Protein C (186 aa).

A compositionally biased stretch (polar residues) spans 1-15 (MSKTDWNASGLSRPS). The tract at residues 1–45 (MSKTDWNASGLSRPSPSAHWPSRKPWQHGQKYQTTQDRTEPPARK) is disordered.

The protein belongs to the morbillivirus protein C family. In terms of assembly, interacts with the phosphoprotein (via C-terminus); this interaction allows C to associate with the ribonucleocapsid.

Its subcellular location is the host nucleus. The protein localises to the host cytoplasmic vesicle. Ribonucleocapsid-associated protein that interacts with the phosphoprotein (P), thereby increasing replication accuracy and processivity of the polymerase complex. In Homo sapiens (Human), this protein is Protein C (P/V/C).